The following is a 268-amino-acid chain: MNGTANPLLDREEHCLRLGESFEKRPRASFHTIRYDFKPASIDTSCEGELQVGKGDEVTITLPHIPGSTPPMTVFKGNKRPYQKDCVLIINHDTGEYVLEKLSSSIQVKKTRAEGSSKIQARMEQQPTRPPQTSQPPPPPPPMPFRAPTKPPVGPKTSPLKDNPSPEPQLDDIKRELRAEVDIIEQMSSSSGSSSSDSESSSGSDDDSSSSGGEDNGPASPPQPSHQQPYNSRPAVANGTSRPQGSNQLMNTLRNDLQLSESGSDSDD.

Residues 106–268 (IQVKKTRAEG…LSESGSDSDD (163 aa)) are disordered. A compositionally biased stretch (pro residues) spans 128 to 154 (TRPPQTSQPPPPPPPMPFRAPTKPPVG). Phosphoserine is present on Ser165. Basic and acidic residues predominate over residues 171–181 (DDIKRELRAEV). The interval 182 to 262 (DIIEQMSSSS…LRNDLQLSES (81 aa)) is necessary for transactivation activity. The span at 188–213 (SSSSGSSSSDSESSSGSDDDSSSSGG) shows a compositional bias: low complexity. Residues 238 to 268 (NGTSRPQGSNQLMNTLRNDLQLSESGSDSDD) are compositionally biased toward polar residues.

It belongs to the EAF family. As to quaternary structure, component of the super elongation complex (SEC), at least composed of EAF1, EAF2, CDK9, MLLT3/AF9, AFF (AFF1 or AFF4), the P-TEFb complex and ELL (ELL, ELL2 or ELL3). Interacts with ELL and ELL2. As to expression, strongly expressed in heart, brain, placenta, lung, liver, skeletal muscle, kidney, pancreas, spleen, prostate, testis, small intestine and colon. Poorly expressed in thymus.

The protein localises to the nucleus speckle. Its subcellular location is the nucleus. The protein resides in the cajal body. Acts as a transcriptional transactivator of ELL and ELL2 elongation activities. This is ELL-associated factor 1 (EAF1) from Homo sapiens (Human).